A 156-amino-acid chain; its full sequence is 6,7-dimethyl-8-ribityllumazine synthase (156 aa).

5-amino-6-(D-ribitylamino)uracil-binding positions include Phe-25, Ala-59–Glu-61, and Ala-83–Ile-85. A (2S)-2-hydroxy-3-oxobutyl phosphate-binding site is contributed by Ala-88–Thr-89. The active-site Proton donor is His-91. Residue Phe-116 participates in 5-amino-6-(D-ribitylamino)uracil binding. Arg-130 contacts (2S)-2-hydroxy-3-oxobutyl phosphate.

This sequence belongs to the DMRL synthase family.

The enzyme catalyses (2S)-2-hydroxy-3-oxobutyl phosphate + 5-amino-6-(D-ribitylamino)uracil = 6,7-dimethyl-8-(1-D-ribityl)lumazine + phosphate + 2 H2O + H(+). It participates in cofactor biosynthesis; riboflavin biosynthesis; riboflavin from 2-hydroxy-3-oxobutyl phosphate and 5-amino-6-(D-ribitylamino)uracil: step 1/2. Catalyzes the formation of 6,7-dimethyl-8-ribityllumazine by condensation of 5-amino-6-(D-ribitylamino)uracil with 3,4-dihydroxy-2-butanone 4-phosphate. This is the penultimate step in the biosynthesis of riboflavin. The sequence is that of 6,7-dimethyl-8-ribityllumazine synthase from Nitratidesulfovibrio vulgaris (strain ATCC 29579 / DSM 644 / CCUG 34227 / NCIMB 8303 / VKM B-1760 / Hildenborough) (Desulfovibrio vulgaris).